The primary structure comprises 352 residues: Pejvakin (352 aa).

This sequence belongs to the gasdermin family. As to quaternary structure, interacts with MAP1LC3B; interaction is direct. Interacts with IQGAP1. Interacts with ROCK2. Interacts with TRIOBP.

It localises to the peroxisome membrane. It is found in the cell projection. Its subcellular location is the cilium. Its function is as follows. Peroxisome-associated protein required to protect auditory hair cells against noise-induced damage. Acts by regulating noise-induced peroxisome proliferation in auditory hair cells and neurons, and promoting autophagic degradation of damaged peroxisomes (pexophagy). Noise overexposure increases reactive oxygen species (ROS) levels, causing oxidative damage to auditory hair cells and resulting in hearing loss. PJVK acts as a ROS sensor that recruits the autophagy machinery to trigger pexophagy of peroxisomes damaged by oxidative stress. In addition to pexophagy, also required to promote peroxisome proliferation in response to sound overstimulation. This chain is Pejvakin, found in Homo sapiens (Human).